The chain runs to 347 residues: GMP reductase (347 aa).

108 to 131 (ADFEKTVQILALNPALNFVCIDVA) contributes to the NADP(+) binding site. Residues Gly-181 and Gly-183 each coordinate K(+). The Thioimidate intermediate role is filled by Cys-186. Position 216–239 (216–239 (IVSDGGCTMPGDVAKAFGGGADFV)) interacts with NADP(+).

Belongs to the IMPDH/GMPR family. GuaC type 1 subfamily. As to quaternary structure, homotetramer.

It catalyses the reaction IMP + NH4(+) + NADP(+) = GMP + NADPH + 2 H(+). In terms of biological role, catalyzes the irreversible NADPH-dependent deamination of GMP to IMP. It functions in the conversion of nucleobase, nucleoside and nucleotide derivatives of G to A nucleotides, and in maintaining the intracellular balance of A and G nucleotides. The chain is GMP reductase from Salmonella paratyphi A (strain ATCC 9150 / SARB42).